The sequence spans 205 residues: Large ribosomal subunit protein uL4 (205 aa).

Positions 43 to 60 (ARSGNRAQQTRAEVSAST) are enriched in polar residues. Residues 43–96 (ARSGNRAQQTRAEVSASTHKPWRQKGTGRARSGRASSPIWRGGGVTFPNKPNEN) are disordered. Positions 62–74 (KPWRQKGTGRARS) are enriched in basic residues.

It belongs to the universal ribosomal protein uL4 family. In terms of assembly, part of the 50S ribosomal subunit.

In terms of biological role, one of the primary rRNA binding proteins, this protein initially binds near the 5'-end of the 23S rRNA. It is important during the early stages of 50S assembly. It makes multiple contacts with different domains of the 23S rRNA in the assembled 50S subunit and ribosome. Functionally, forms part of the polypeptide exit tunnel. The polypeptide is Large ribosomal subunit protein uL4 (Thiobacillus denitrificans (strain ATCC 25259 / T1)).